The chain runs to 397 residues: Elongation factor Tu (397 aa).

Residues 10–206 (KPHVNIGTIG…HIDTYIPEPT (197 aa)) enclose the tr-type G domain. The interval 19-26 (GHVDHGKT) is G1. 19–26 (GHVDHGKT) is a GTP binding site. Residue threonine 26 participates in Mg(2+) binding. The tract at residues 61-65 (GITIS) is G2. Positions 82 to 85 (DCPG) are G3. GTP contacts are provided by residues 82 to 86 (DCPGH) and 137 to 140 (NKCD). The G4 stretch occupies residues 137 to 140 (NKCD). Positions 175–177 (SAL) are G5.

Belongs to the TRAFAC class translation factor GTPase superfamily. Classic translation factor GTPase family. EF-Tu/EF-1A subfamily. In terms of assembly, monomer.

It localises to the cytoplasm. The enzyme catalyses GTP + H2O = GDP + phosphate + H(+). Its function is as follows. GTP hydrolase that promotes the GTP-dependent binding of aminoacyl-tRNA to the A-site of ribosomes during protein biosynthesis. The sequence is that of Elongation factor Tu from Alkaliphilus oremlandii (strain OhILAs) (Clostridium oremlandii (strain OhILAs)).